A 312-amino-acid polypeptide reads, in one-letter code: Putative mitochondrial transporter UCP3 (312 aa).

The Mitochondrial intermembrane portion of the chain corresponds to 1 to 10 (MVGLKPSDVP). A helical membrane pass occupies residues 11–32 (PTMAVKFLGAGTAACFADLVTF). 3 Solcar repeats span residues 11–105 (PTMA…VKQV), 114–206 (SSLT…LKEK), and 215–300 (DNFP…LKRA). Over 33 to 76 (PLDTAKVRLQIQGENQAVQTARLVQYRGVLGTILTMVRTEGPCS) the chain is Mitochondrial matrix. A helical membrane pass occupies residues 77–99 (PYNGLVAGLQRQMSFASIRIGLY). Over 100-119 (DSVKQVYTPKGADNSSLTTR) the chain is Mitochondrial intermembrane. The chain crosses the membrane as a helical span at residues 120–136 (ILAGCTTGAMAVTCAQP). At 137 to 183 (TDVVKVRFQASIHLGPSRSDRKYSGTMDAYRTIAREEGVRGLWKGTL) the chain is on the mitochondrial matrix side. Residues 184-200 (PNIMRNAIVNCAEVVTY) form a helical membrane-spanning segment. Residues 201 to 217 (DILKEKLLDYHLLTDNF) lie on the Mitochondrial intermembrane side of the membrane. Residues 218–237 (PCHFVSAFGAGFCATVVASP) traverse the membrane as a helical segment. Topologically, residues 238–271 (VDVVKTRYMNSPPGQYFSPLDCMIKMVAQEGPTA) are mitochondrial matrix. A helical membrane pass occupies residues 272 to 294 (FYKGFTPSFLRLGSWNVVMFVTY). The segment at 279–301 (SFLRLGSWNVVMFVTYEQLKRAL) is purine nucleotide binding. The Mitochondrial intermembrane portion of the chain corresponds to 295 to 312 (EQLKRALMKVQMLRESPF).

It belongs to the mitochondrial carrier (TC 2.A.29) family. In terms of assembly, interacts with HAX1; the interaction is direct and calcium-dependent. In terms of tissue distribution, only in skeletal muscle and heart. Also expressed in white and brown adipose tissues. Is more expressed in glycolytic than in oxidative skeletal muscles.

It localises to the mitochondrion inner membrane. Its activity is regulated as follows. The proton transporter activity is activated by fatty acids (in vitro). The proton transporter activity is inhibited by ATP and ADP (in vitro). The effect of Ubiquinone/coenzyme Q10 on the proton transporter activity in reconstituted membranes is unclear (in vitro). Its function is as follows. Putative transmembrane transporter that plays a role in mitochondrial metabolism via an as yet unclear mechanism. Originally, this mitochondrial protein was thought to act as a proton transmembrane transporter from the mitochondrial intermembrane space into the matrix, causing proton leaks through the inner mitochondrial membrane, thereby uncoupling mitochondrial membrane potential generation from ATP synthesis. However, this function is controversial and uncoupling may not be the function, or at least not the main function, but rather a consequence of more conventional metabolite transporter activity. The sequence is that of Putative mitochondrial transporter UCP3 from Homo sapiens (Human).